A 431-amino-acid chain; its full sequence is Mevalonate kinase (431 aa).

Residues K13, S139, and 144–150 (GAGLGSS) contribute to the ATP site. S150 and E198 together coordinate Mg(2+). Catalysis depends on D209, which acts as the Proton acceptor.

This sequence belongs to the GHMP kinase family. Mevalonate kinase subfamily. In terms of assembly, homodimer.

It is found in the cytoplasm. It localises to the cytosol. The catalysed reaction is (R)-mevalonate + ATP = (R)-5-phosphomevalonate + ADP + H(+). Its pathway is isoprenoid biosynthesis; isopentenyl diphosphate biosynthesis via mevalonate pathway; isopentenyl diphosphate from (R)-mevalonate: step 1/3. Functionally, mevalonate kinase; part of the second module of ergosterol biosynthesis pathway that includes the middle steps of the pathway. ERG12 converts mevalonate into 5-phosphomevalonate. The second module is carried out in the vacuole and involves the formation of farnesyl diphosphate, which is also an important intermediate in the biosynthesis of ubiquinone, dolichol, heme and prenylated proteins. Activity by the mevalonate kinase ERG12 first converts mevalonate into 5-phosphomevalonate. 5-phosphomevalonate is then further converted to 5-diphosphomevalonate by the phosphomevalonate kinase ERG8. The diphosphomevalonate decarboxylase MVD then produces isopentenyl diphosphate. The isopentenyl-diphosphate delta-isomerase IDI1 then catalyzes the 1,3-allylic rearrangement of the homoallylic substrate isopentenyl (IPP) to its highly electrophilic allylic isomer, dimethylallyl diphosphate (DMAPP). Finally the farnesyl diphosphate synthase ERG20 catalyzes the sequential condensation of isopentenyl pyrophosphate with dimethylallyl pyrophosphate, and then with the resultant geranylpyrophosphate to the ultimate product farnesyl pyrophosphate. The protein is Mevalonate kinase of Candida albicans (strain SC5314 / ATCC MYA-2876) (Yeast).